The primary structure comprises 406 residues: Imidazolonepropionase (406 aa).

Residues H67 and H69 each contribute to the Fe(3+) site. Zn(2+) is bound by residues H67 and H69. 3 residues coordinate 4-imidazolone-5-propanoate: R76, Y139, and H172. Y139 provides a ligand contact to N-formimidoyl-L-glutamate. H237 contacts Fe(3+). H237 lines the Zn(2+) pocket. Q240 is a binding site for 4-imidazolone-5-propanoate. Fe(3+) is bound at residue D312. D312 lines the Zn(2+) pocket. N-formimidoyl-L-glutamate contacts are provided by N314 and G316. A 4-imidazolone-5-propanoate-binding site is contributed by T317.

Belongs to the metallo-dependent hydrolases superfamily. HutI family. It depends on Zn(2+) as a cofactor. The cofactor is Fe(3+).

It is found in the cytoplasm. It carries out the reaction 4-imidazolone-5-propanoate + H2O = N-formimidoyl-L-glutamate. The protein operates within amino-acid degradation; L-histidine degradation into L-glutamate; N-formimidoyl-L-glutamate from L-histidine: step 3/3. Catalyzes the hydrolytic cleavage of the carbon-nitrogen bond in imidazolone-5-propanoate to yield N-formimidoyl-L-glutamate. It is the third step in the universal histidine degradation pathway. The chain is Imidazolonepropionase from Paraburkholderia phymatum (strain DSM 17167 / CIP 108236 / LMG 21445 / STM815) (Burkholderia phymatum).